The following is a 299-amino-acid chain: Peroxisomal biogenesis factor 19 (299 aa).

The interval 1–61 is disordered; the sequence is MAAAEEGCGV…KRAPGDTAKD (61 aa). Residue Ala2 is modified to N-acetylalanine. Positions 2–56 are docking to the peroxisome membrane and binding to PEX3; that stretch reads AAAEEGCGVGVEDDRELEELLESALDDFDKAKPSPEHAPTISAPDASGPQKRAPG. A necessary for PEX19 function on peroxisome biogenesis region spans residues 2-91; it reads AAAEEGCGVG…QATAEFEKAM (90 aa). A compositionally biased stretch (acidic residues) spans 12 to 27; sequence VEDDRELEELLESALD. Phosphoserine occurs at positions 35 and 66. Thr236 bears the Phosphothreonine mark. Residue Cys296 is modified to Cysteine methyl ester. Residue Cys296 is the site of S-farnesyl cysteine attachment. Residues 297 to 299 constitute a propeptide, removed in mature form; sequence LIM.

Belongs to the peroxin-19 family. Interacts with a broad range of peroxisomal membrane proteins, including PEX3, PEX10, PEX11A, PEX11B, PEX12, PEX13, PEX14 and PEX16, PXMP2/PMP22, PXMP4/PMP24, SLC25A17/PMP34, ABCD1/ALDP, ABCD2/ALDRP, and ABCD3/PMP70. Also interacts with the tumor suppressor CDKN2A/p19ARF.

Its subcellular location is the cytoplasm. It is found in the peroxisome membrane. In terms of biological role, necessary for early peroxisomal biogenesis. Acts both as a cytosolic chaperone and as an import receptor for peroxisomal membrane proteins (PMPs). Binds and stabilizes newly synthesized PMPs in the cytoplasm by interacting with their hydrophobic membrane-spanning domains, and targets them to the peroxisome membrane by binding to the integral membrane protein PEX3. Excludes CDKN2A from the nucleus and prevents its interaction with MDM2, which results in active degradation of TP53. The polypeptide is Peroxisomal biogenesis factor 19 (Pex19) (Mus musculus (Mouse)).